The primary structure comprises 340 residues: Heat-inducible transcription repressor HrcA (340 aa).

It belongs to the HrcA family.

Negative regulator of class I heat shock genes (grpE-dnaK-dnaJ and groELS operons). Prevents heat-shock induction of these operons. This Mycoplasmopsis synoviae (strain 53) (Mycoplasma synoviae) protein is Heat-inducible transcription repressor HrcA.